The following is a 396-amino-acid chain: L-lactate dehydrogenase (396 aa).

An FMN hydroxy acid dehydrogenase domain is found at 1–380 (MIISAASDYR…SGDSLVQELG (380 aa)). Y24 serves as a coordination point for substrate. FMN-binding residues include S106 and Q127. Y129 lines the substrate pocket. T155 is an FMN binding site. R164 is a binding site for substrate. K251 lines the FMN pocket. The active-site Proton acceptor is the H275. R278 provides a ligand contact to substrate. FMN is bound at residue 306-330 (DSGIRNGLDVVRMIALGADTVLLGR).

It belongs to the FMN-dependent alpha-hydroxy acid dehydrogenase family. The cofactor is FMN.

It is found in the cell inner membrane. The catalysed reaction is (S)-lactate + A = pyruvate + AH2. In terms of biological role, catalyzes the conversion of L-lactate to pyruvate. Is coupled to the respiratory chain. This Salmonella paratyphi C (strain RKS4594) protein is L-lactate dehydrogenase.